A 473-amino-acid chain; its full sequence is Glutamate--tRNA ligase 2 (473 aa).

Positions 11 to 21 (PSPTGYLHIGG) match the 'HIGH' region motif. Residues 113–133 (KARAEGRPPRYDGRWRDRDPS) show a composition bias toward basic and acidic residues. The segment at 113–136 (KARAEGRPPRYDGRWRDRDPSEAP) is disordered. The short motif at 240-244 (KLSKR) is the 'KMSKS' region element. Lys-243 serves as a coordination point for ATP.

It belongs to the class-I aminoacyl-tRNA synthetase family. Glutamate--tRNA ligase type 1 subfamily. Monomer.

Its subcellular location is the cytoplasm. The catalysed reaction is tRNA(Glu) + L-glutamate + ATP = L-glutamyl-tRNA(Glu) + AMP + diphosphate. Functionally, catalyzes the attachment of glutamate to tRNA(Glu) in a two-step reaction: glutamate is first activated by ATP to form Glu-AMP and then transferred to the acceptor end of tRNA(Glu). The chain is Glutamate--tRNA ligase 2 from Brucella suis biovar 1 (strain 1330).